Here is a 309-residue protein sequence, read N- to C-terminus: METLLKRELGCSSVKATGHSGGGCISQGQSYDTDKGRVFVKVNSKAEARRMFEGEMASLTAILKTGTVKVPKPIKVVDAPGGGSMLVMEHLDMRYLSSHATKLGTQLADLHLENKRLGERLLKEAGTVGKGGEQAERQYVDQFGFDVVTCCGYLPQVNDWQKNWVEFYARQRIQPQMDMVEKKSGDREALELWSALQLKIPDLFRDLEIVPALLHGDLWGGNVAEDSSGPIIFDPASFYGHSEYELAIAGMFGGFSSSFYSAYHSKIPKTPGFEKRLQLYQLFHYLNHWNHFGSGYRGSSLNIMRNLSK.

Residue S20 is modified to Phosphoserine. 89-91 (EHL) is an ATP binding site. The active-site Proton acceptor is the D217.

It belongs to the fructosamine kinase family.

The catalysed reaction is N(6)-D-ribulosyl-L-lysyl-[protein] + ATP = N(6)-(3-O-phospho-D-ribulosyl)-L-lysyl-[protein] + ADP + H(+). It catalyses the reaction N(6)-(D-psicosyl)-L-lysyl-[protein] + ATP = N(6)-(3-O-phospho-D-psicosyl)-L-lysyl-[protein] + ADP + H(+). Ketosamine-3-kinase involved in protein deglycation by mediating phosphorylation of ribuloselysine and psicoselysine on glycated proteins, to generate ribuloselysine-3 phosphate and psicoselysine-3 phosphate, respectively. Ribuloselysine-3 phosphate and psicoselysine-3 phosphate adducts are unstable and decompose under physiological conditions. Not able to phosphorylate fructoselysine. This Mus musculus (Mouse) protein is Ketosamine-3-kinase.